A 469-amino-acid chain; its full sequence is ATP synthase subunit beta (469 aa).

ATP is bound at residue 155 to 162 (GGAGVGKT).

Belongs to the ATPase alpha/beta chains family. F-type ATPases have 2 components, CF(1) - the catalytic core - and CF(0) - the membrane proton channel. CF(1) has five subunits: alpha(3), beta(3), gamma(1), delta(1), epsilon(1). CF(0) has three main subunits: a(1), b(2) and c(9-12). The alpha and beta chains form an alternating ring which encloses part of the gamma chain. CF(1) is attached to CF(0) by a central stalk formed by the gamma and epsilon chains, while a peripheral stalk is formed by the delta and b chains.

It localises to the cell inner membrane. It carries out the reaction ATP + H2O + 4 H(+)(in) = ADP + phosphate + 5 H(+)(out). Functionally, produces ATP from ADP in the presence of a proton gradient across the membrane. The catalytic sites are hosted primarily by the beta subunits. In Helicobacter pylori (strain ATCC 700392 / 26695) (Campylobacter pylori), this protein is ATP synthase subunit beta.